The chain runs to 459 residues: Pentatricopeptide repeat-containing protein At5g18390, mitochondrial (459 aa).

A mitochondrion-targeting transit peptide spans 1–7; the sequence is MLLLRRY. PPR repeat units follow at residues 110–144, 145–175, 181–215, 216–250, 251–285, 286–320, 321–355, 356–390, and 391–425; these read TSME…SLDI, SGET…VPKT, TVDV…GLKP, DKRT…GFNP, PARG…GFVP, DIQT…GLCV, DIDT…GHKP, FPSL…AHPP, and NRPV…GLVP.

Belongs to the PPR family. P subfamily.

The protein localises to the mitochondrion. This chain is Pentatricopeptide repeat-containing protein At5g18390, mitochondrial, found in Arabidopsis thaliana (Mouse-ear cress).